An 86-amino-acid chain; its full sequence is Large ribosomal subunit protein bL27 (86 aa).

Residues 1–26 form a disordered region; that stretch reads MASKKAGGSTKNGRDSQSKRLGVKRF.

It belongs to the bacterial ribosomal protein bL27 family.

In Bdellovibrio bacteriovorus (strain ATCC 15356 / DSM 50701 / NCIMB 9529 / HD100), this protein is Large ribosomal subunit protein bL27.